The following is an 838-amino-acid chain: MALIDVAISCLNSIREIEEDVKDAIVYIDAGCTESFQFVGAFPLFLELGARAVCSLENMTSLDAVADWNSKSDCAKRIVIMTSRLLNDAHRYMLRCLSTHEGVQRCTVFTSISEGSHSAIPDSPLGPDAYREYETLLVQDYNEHTKKSDKISKDKGVSKFSSALESLTMEPIESENVDISSGGAQGLVVSVHHFPLIICPFTPRAFVLPSQGSVAEASLSRQHEDSLSFGLPPISTGSMSDTDDVPPGATLTAHFLYQLALKMELKLEIFSLGDQSKNVGKILTDMSSVYDVARRKRSAGLLLVDRTLDLITPCCHGDSLFDRIFSSLPRAERFSSQAQLKQGVPSINRPSLDVQVPLGELLNEEPSKIRDSGLPEGIEAFLRGWDSYTSAPQNVGLFNECDKKSTTNWTELLNGSLVATECFRGTPYLEAMIDRKTKDGSVLVKKWLQEALRRENISVNVRARPGYATKPELQAMIKALSQSQSSLLKNKGIIQLGAATAAALDESQSAKWDTFSSAEMMLNVSAGDTSQGLAAQISDLINKSAVAELQAKKNEKPDSSSRGLLSFRDALLLTIVGYILAGENFPTSGSGGPFSWQEEHFLKEAIVDAVLENPSAGNLKFLNGLTEELEGRLNRLKSEETKEIPSDDQLDIDALDDDPWGKWGDEEEEEVDNSKADESYDDMQLKLDLRDRVDSLFRFLHKLSSLRTRNLPLREGSLASESSFPGEPSGNKGLVYRLITKVLSKQEIPGLEYHSSTVGRFIKSGFGRFGLGQAKPSLADQSVILVFVIGGINGIEVLEAQEAVSESGRPDINLVIGGTTLLTPDDMFELLLGQFSHF.

The interval 637–677 is disordered; it reads KSEETKEIPSDDQLDIDALDDDPWGKWGDEEEEEVDNSKAD. Over residues 646-658 the composition is skewed to acidic residues; sequence SDDQLDIDALDDD.

Belongs to the STXBP/unc-18/SEC1 family. As to quaternary structure, forms a complex with MAG2, ZW10/MIP1 and MIP2 on the endoplasmic reticulum.

It is found in the endoplasmic reticulum membrane. Functionally, required for proper maturation of seed storage proteins. Forms a complex with MAG2, ZW10/MIP1 and MIP2 on the endoplasmic reticulum that may be responsible for efficient transport of seed storage proteins. This Arabidopsis thaliana (Mouse-ear cress) protein is Sec1 family domain-containing protein MIP3.